Reading from the N-terminus, the 188-residue chain is Peptidyl-prolyl cis-trans isomerase H (188 aa).

At Ala-2 the chain carries N-acetylalanine. Positions 14–176 (FFDVSIGGQE…WTHSLTCPAL (163 aa)) constitute a PPIase cyclophilin-type domain.

This sequence belongs to the cyclophilin-type PPIase family. PPIase H subfamily. In terms of assembly, interacts directly with PRPF4. Part of a heteromeric complex containing PPIH, PRPF3 and PRPF4 that is stable in the absence of RNA. Component of the U4/U6-U5 tri-snRNP complex composed of the U4, U6 and U5 snRNAs and at least PRPF3, PRPF4, PRPF6, PRPF8, PRPF31, SNRNP200, TXNL4A, SNRNP40, DDX23, CD2BP2, PPIH, SNU13, EFTUD2, SART1 and USP39. Heterodimer with PRPF18. Heterodimer with PRPF18.

Its subcellular location is the nucleus speckle. It localises to the cytoplasm. The catalysed reaction is [protein]-peptidylproline (omega=180) = [protein]-peptidylproline (omega=0). Inhibited by cyclosporin A. Functionally, PPIase that catalyzes the cis-trans isomerization of proline imidic peptide bonds in oligopeptides and may therefore assist protein folding. Participates in pre-mRNA splicing. May play a role in the assembly of the U4/U5/U6 tri-snRNP complex, one of the building blocks of the spliceosome. May act as a chaperone. The polypeptide is Peptidyl-prolyl cis-trans isomerase H (Ppih) (Mus musculus (Mouse)).